The sequence spans 955 residues: Histone deacetylase 6 (955 aa).

Histone deacetylase regions lie at residues 15–337 (TLIG…YAPF) and 425–749 (METL…VLQN). The active-site 1 is histidine 146. Catalysis depends on histidine 561, which acts as the 2. Residues 815–840 (SIDMADQSSSSGSSSSSTRPSHNLEI) form a disordered region. Low complexity predominate over residues 818–831 (MADQSSSSGSSSSS). The UBP-type zinc-finger motif lies at 853-951 (ATCPHLKEVK…SAAHESKFGE (99 aa)). Residues cysteine 855, histidine 857, cysteine 875, cysteine 878, cysteine 887, cysteine 890, and cysteine 895 each coordinate Zn(2+). A ubiquitin binding region spans residues 896–898 (GRF). 5 residues coordinate Zn(2+): histidine 902, histidine 906, histidine 912, cysteine 925, and cysteine 928. A ubiquitin binding region spans residues 924–931 (WCYPCDSY).

Belongs to the histone deacetylase family. HD type 2 subfamily. It depends on Zn(2+) as a cofactor.

The protein resides in the nucleus. The enzyme catalyses N(6)-acetyl-L-lysyl-[histone] + H2O = L-lysyl-[histone] + acetate. Probable histone deacetylase. Histone deacetylases are responsible for the deacetylation of lysine residues on the N-terminal part of the core histones (H2A, H2B, H3 and H4). Histone deacetylation gives a tag for epigenetic repression and plays an important role in transcriptional regulation, cell cycle progression and developmental events. Histone deacetylases act via the formation of large multiprotein complexes. This is Histone deacetylase 6 (hda-6) from Caenorhabditis elegans.